The sequence spans 88 residues: Apolipoprotein C-I (88 aa).

Residues 1–26 (MRLFISLPVLIVVLAMALEGPAPAQA) form the signal peptide.

This sequence belongs to the apolipoprotein C1 family.

Its subcellular location is the secreted. Functionally, inhibitor of lipoprotein binding to the low density lipoprotein (LDL) receptor, LDL receptor-related protein, and very low density lipoprotein (VLDL) receptor. Associates with high density lipoproteins (HDL) and the triacylglycerol-rich lipoproteins in the plasma and makes up about 10% of the protein of the VLDL and 2% of that of HDL. Appears to interfere directly with fatty acid uptake and is also the major plasma inhibitor of cholesteryl ester transfer protein (CETP). Modulates the interaction of APOE with beta-migrating VLDL and inhibits binding of beta-VLDL to the LDL receptor-related protein. Binds free fatty acids and reduces their intracellular esterification. In Myodes glareolus (Bank vole), this protein is Apolipoprotein C-I (APOC1).